A 1081-amino-acid chain; its full sequence is DNA-directed RNA polymerase subunit beta (1081 aa).

The protein belongs to the RNA polymerase beta chain family. In terms of assembly, in plastids the minimal PEP RNA polymerase catalytic core is composed of four subunits: alpha, beta, beta', and beta''. When a (nuclear-encoded) sigma factor is associated with the core the holoenzyme is formed, which can initiate transcription.

Its subcellular location is the plastid. The protein resides in the chloroplast. The enzyme catalyses RNA(n) + a ribonucleoside 5'-triphosphate = RNA(n+1) + diphosphate. Functionally, DNA-dependent RNA polymerase catalyzes the transcription of DNA into RNA using the four ribonucleoside triphosphates as substrates. In Cyanidium caldarium (Red alga), this protein is DNA-directed RNA polymerase subunit beta.